We begin with the raw amino-acid sequence, 368 residues long: Trans-enoyl reductase thnE (368 aa).

53–56 (VDVK) contacts NADP(+). 140-147 (LATATAAY) lines the substrate pocket. NADP(+)-binding positions include 179–182 (STAT), 202–205 (SPSN), Tyr-220, and 267–268 (VE). Residue 289–293 (VMTVW) participates in substrate binding. 358–359 (PS) contributes to the NADP(+) binding site.

The protein belongs to the zinc-containing alcohol dehydrogenase family. Monomer.

It carries out the reaction malate + 6 malonyl-CoA + acetyl-CoA + 2 AH2 + 2 S-adenosyl-L-methionine + 5 NADPH + 9 H(+) = trihazone A + 2 A + 2 S-adenosyl-L-homocysteine + 6 CO2 + 5 NADP(+) + 7 CoA + 6 H2O. Its pathway is secondary metabolite biosynthesis. Functionally, trans-enoyl reductase; part of the gene cluster that produces the tetronate natural products trihazones. The PKS-NRPS synthetase thnA with the help of the trans-enoyl reductase thnE are responsible for the synthesis of the carboxylmethyl containing trihazone A. The PKS portion of thnA synthesizes beta-keto-triene chain from one acetyl-CoA and 6 equivalents of malonyl-CoA, in collaboration with thnE, which selectively reduces the enoyl intermediate during the first and fourth iteration of the PKS. The NRPS domain selects and activates malate, of which the alpha-hydroxyl group attacks the completed polyketide acyl-S-ACP chain to form the ester product. Intramolecular Dieckmann cyclization catalyzed by the terminal reductase domain releases the product as trihazone A from the PKS-NPRS. The pathway begins with the formation of trihazone A by the hybrid PKS-NRPS synthetase thnA and the trans-enoyl reductase thnE. Trihazone A is further decarboxylated by the 2-oxoglutarate-dependent dioxygenase thnC to produce trihazone D. The function of the FAD-dependent monooxygenase thnD has still to be identified. The sequence is that of Trans-enoyl reductase thnE from Trichoderma harzianum (Hypocrea lixii).